Here is an 862-residue protein sequence, read N- to C-terminus: MEPVSHQDMPRLSWIDTLYSNFNYGTDGYDAEGNEEHKNSREGSETMPYIDESPTMSPQLSARSQDSVDGVSPTPTEVLLPGGESESDKGLLMRKLVLSGVLASEEIYINQLEALLLPMKPLKATASTSQPVLTLQQINDIFYKIEDIYQMHKDFYDKLCPIVQQWDNKTTVGHLFQKLATQLGVYKAFVDNYKFALETAEKCSQCNVQFFKISEDLKVKGPKDSKEQPQSVTMEALLYKPIDRVTRSTLVLHDLLKHTPTDHPDYPLLQDALRISQNFLSSINEDIDPRRTAVTTPKGEPRQLVKDGFLVELSENSRKLRHLFLFTDLLLCAKLKKTTVGKHQQYDCKWYIPLADLVFPSLEESEPIHQLHATPDYEIEEMKAKISVLKSEIQKEKKSNKGSSRAIERLKKKMFEYESWLLLYSPTIPFRIHNKNGKSYLFLLSSDYERSEWREAIQKLQKKDLQALALSPFELQVLTASCFKLRTVHNVPIISHKDDDESPGLYGFLHVIVKSAKGFSHSSNFYCTLEVDSFGYFVSKAKTRVFRDTSEPEWNEEFEIELEGSQCLRILCYETCYDKSKLNKDNNEIVDKIMGKGQIQLDPQGVQSKNWHDDVIEMNGIKVEFSMKFSSRDMSLKRTPSKKQTGVFGVKISVVTKRERSKVPYIVRQCIEEVEKRGIEEVGIYRISGVATDIQALKAAFDANSKDILMMLSDMDINAIAGTLKLYFRELPEPLLTDRLYLAFMEGIALSDPAAKENCMMHLLRSLPDPNLITFLFLLHHLKKVAENEPINKMSLHNLATVFGPTLLRPSEVEIKGHMNLASDIWSHDVMAQVQVLLYYLQHPPISFSELKRSTLYYSTDV.

The interval 29–84 (YDAEGNEEHKNSREGSETMPYIDESPTMSPQLSARSQDSVDGVSPTPTEVLLPGGE) is disordered. Basic and acidic residues predominate over residues 34-44 (NEEHKNSREGS). The segment covering 54-67 (PTMSPQLSARSQDS) has biased composition (polar residues). A DH domain is found at 93-286 (MRKLVLSGVL…QNFLSSINED (194 aa)). In terms of domain architecture, PH spans 303–462 (QLVKDGFLVE…WREAIQKLQK (160 aa)). In terms of domain architecture, C2 spans 488 to 616 (VHNVPIISHK…QSKNWHDDVI (129 aa)). Positions 650–848 (VKISVVTKRE…YYLQHPPISF (199 aa)) constitute a Rho-GAP domain.

It localises to the cell projection. The protein resides in the dendritic spine. It is found in the axon. Its subcellular location is the synapse. Functionally, protein with a unique structure having two opposing regulatory activities toward small GTP-binding proteins. The C-terminus is a GTPase-activating protein domain which stimulates GTP hydrolysis by RAC1, RAC2 and CDC42. Accelerates the intrinsic rate of GTP hydrolysis of RAC1 or CDC42, leading to down-regulation of the active GTP-bound form. The central Dbl homology (DH) domain functions as guanine nucleotide exchange factor (GEF) that modulates the GTPases CDC42, RHOA and RAC1. Promotes the conversion of CDC42, RHOA and RAC1 from the GDP-bound to the GTP-bound form. The chain is Active breakpoint cluster region-related protein (abr) from Xenopus laevis (African clawed frog).